The primary structure comprises 90 residues: UPF0298 protein BLi01717/BL02989 (90 aa).

It belongs to the UPF0298 family.

The protein resides in the cytoplasm. This is UPF0298 protein BLi01717/BL02989 from Bacillus licheniformis (strain ATCC 14580 / DSM 13 / JCM 2505 / CCUG 7422 / NBRC 12200 / NCIMB 9375 / NCTC 10341 / NRRL NRS-1264 / Gibson 46).